We begin with the raw amino-acid sequence, 29 residues long: Cytochrome b6-f complex subunit 8 (29 aa).

The helical transmembrane segment at 3–23 threads the bilayer; it reads IVSIGWAALMVVFTFSLSLVV.

It belongs to the PetN family. As to quaternary structure, the 4 large subunits of the cytochrome b6-f complex are cytochrome b6, subunit IV (17 kDa polypeptide, PetD), cytochrome f and the Rieske protein, while the 4 small subunits are PetG, PetL, PetM and PetN. The complex functions as a dimer.

Its subcellular location is the plastid. The protein resides in the chloroplast thylakoid membrane. In terms of biological role, component of the cytochrome b6-f complex, which mediates electron transfer between photosystem II (PSII) and photosystem I (PSI), cyclic electron flow around PSI, and state transitions. The polypeptide is Cytochrome b6-f complex subunit 8 (Zygnema circumcarinatum (Green alga)).